A 291-amino-acid polypeptide reads, in one-letter code: Bifunctional protein FolD (291 aa).

NADP(+) contacts are provided by residues 167 to 169, Ser-192, and Ile-233; that span reads GRS.

The protein belongs to the tetrahydrofolate dehydrogenase/cyclohydrolase family. In terms of assembly, homodimer.

It carries out the reaction (6R)-5,10-methylene-5,6,7,8-tetrahydrofolate + NADP(+) = (6R)-5,10-methenyltetrahydrofolate + NADPH. The catalysed reaction is (6R)-5,10-methenyltetrahydrofolate + H2O = (6R)-10-formyltetrahydrofolate + H(+). It functions in the pathway one-carbon metabolism; tetrahydrofolate interconversion. In terms of biological role, catalyzes the oxidation of 5,10-methylenetetrahydrofolate to 5,10-methenyltetrahydrofolate and then the hydrolysis of 5,10-methenyltetrahydrofolate to 10-formyltetrahydrofolate. In Dichelobacter nodosus (strain VCS1703A), this protein is Bifunctional protein FolD.